Reading from the N-terminus, the 391-residue chain is Thioredoxin-interacting protein (391 aa).

Lys-212 is covalently cross-linked (Glycyl lysine isopeptide (Lys-Gly) (interchain with G-Cter in ubiquitin)). Ser-361 is subject to Phosphoserine.

Belongs to the arrestin family. Homodimer; disulfide-linked. Interacts with TXN/thioredoxin through its redox-active site. Interacts with transcriptional repressors ZBTB16, ZBTB32 and HDAC1. Interacts with DDIT4. In terms of processing, ubiquitinated; undergoes heterotypic 'Lys-48'-/'Lys-63'-branched polyubiquitination catalyzed by ITCH and UBR5 resulting in proteasomal degradation. Deubiquitinated by USP5, leading to TXNIP stabilization.

The protein localises to the cytoplasm. Functionally, may act as an oxidative stress mediator by inhibiting thioredoxin activity or by limiting its bioavailability. Interacts with COPS5 and restores COPS5-induced suppression of CDKN1B stability, blocking the COPS5-mediated translocation of CDKN1B from the nucleus to the cytoplasm. Functions as a transcriptional repressor, possibly by acting as a bridge molecule between transcription factors and corepressor complexes, and over-expression will induce G0/G1 cell cycle arrest. Required for the maturation of natural killer cells. Acts as a suppressor of tumor cell growth. Inhibits the proteasomal degradation of DDIT4, and thereby contributes to the inhibition of the mammalian target of rapamycin complex 1 (mTORC1). This is Thioredoxin-interacting protein (TXNIP) from Sus scrofa (Pig).